The primary structure comprises 448 residues: Ribosomal protein uS12 methylthiotransferase RimO (448 aa).

The MTTase N-terminal domain maps to 7–123 (EKVSLVSLGC…IAEIIAEKKQ (117 aa)). Residues C16, C52, C86, C161, C165, and C168 each coordinate [4Fe-4S] cluster. The 231-residue stretch at 147–377 (SSPHYTAYLK…MRTQARVSFK (231 aa)) folds into the Radical SAM core domain. The TRAM domain occupies 380–448 (RTLVDSEEDV…DYDLIGEIVD (69 aa)).

The protein belongs to the methylthiotransferase family. RimO subfamily. [4Fe-4S] cluster serves as cofactor.

The protein resides in the cytoplasm. The enzyme catalyses L-aspartate(89)-[ribosomal protein uS12]-hydrogen + (sulfur carrier)-SH + AH2 + 2 S-adenosyl-L-methionine = 3-methylsulfanyl-L-aspartate(89)-[ribosomal protein uS12]-hydrogen + (sulfur carrier)-H + 5'-deoxyadenosine + L-methionine + A + S-adenosyl-L-homocysteine + 2 H(+). Functionally, catalyzes the methylthiolation of an aspartic acid residue of ribosomal protein uS12. The chain is Ribosomal protein uS12 methylthiotransferase RimO from Citrifermentans bemidjiense (strain ATCC BAA-1014 / DSM 16622 / JCM 12645 / Bem) (Geobacter bemidjiensis).